The chain runs to 629 residues: Flap endonuclease GEN-like 1 (629 aa).

The segment at 1–87 (MGVGGSFWDL…DGQPSPLKSQ (87 aa)) is N-domain. Residues 2-98 (GVGGSFWDLL…RAARFFRGSG (97 aa)) form an XPG-N domain region. Residues Asp31, Asp78, Glu148, Glu150, Asp169, Asp171, and Asp221 each contribute to the Mg(2+) site. Positions 136-221 (EYLGMPVLRA…VAMALLVGSD (86 aa)) are XPG-I domain. An I-domain region spans residues 136–225 (EYLGMPVLRA…LLVGSDHDLH (90 aa)). The 5'-3' exonuclease domain stretch occupies residues 221–421 (DHDLHGVPGF…MLPMLSTIYL (201 aa)). The interval 594–617 (KKGLSGDSGKDGSRKSSDVDLSKN) is disordered. The segment covering 601–614 (SGKDGSRKSSDVDL) has biased composition (basic and acidic residues).

The protein belongs to the XPG/RAD2 endonuclease family. GEN subfamily. Monomer. Interacts with PCNA. PCNA stimulates the nuclease activity without altering cleavage specificity. The cofactor is Mg(2+). As to expression, highly expressed in anthers. Expressed in roots and leaves.

It is found in the nucleus. Functionally, endonuclease which cleaves flap structures at the junction between single-stranded DNA and double-stranded DNA. Possesses both single-stranded and double-stranded DNA-binding activities. Involved in early microspore development, but does not alter meiosis or tapetal cells development. Possesses Holliday junction (HJ) resolvase activity in vitro. Cleaves HJ at symmetrically related sites of the branch point. This Oryza sativa subsp. japonica (Rice) protein is Flap endonuclease GEN-like 1.